A 273-amino-acid chain; its full sequence is Formamidopyrimidine-DNA glycosylase (273 aa).

Residue Pro-2 is the Schiff-base intermediate with DNA of the active site. The Proton donor role is filled by Glu-3. Residue Lys-58 is the Proton donor; for beta-elimination activity of the active site. DNA is bound by residues His-92, Arg-111, and Lys-153. An FPG-type zinc finger spans residues 238–272; the sequence is KVYGREGQSCLSCSSTIIKIKHSGRSTFYCKTCQY. Residue Arg-262 is the Proton donor; for delta-elimination activity of the active site.

Belongs to the FPG family. As to quaternary structure, monomer. It depends on Zn(2+) as a cofactor.

The enzyme catalyses Hydrolysis of DNA containing ring-opened 7-methylguanine residues, releasing 2,6-diamino-4-hydroxy-5-(N-methyl)formamidopyrimidine.. It carries out the reaction 2'-deoxyribonucleotide-(2'-deoxyribose 5'-phosphate)-2'-deoxyribonucleotide-DNA = a 3'-end 2'-deoxyribonucleotide-(2,3-dehydro-2,3-deoxyribose 5'-phosphate)-DNA + a 5'-end 5'-phospho-2'-deoxyribonucleoside-DNA + H(+). Functionally, involved in base excision repair of DNA damaged by oxidation or by mutagenic agents. Acts as a DNA glycosylase that recognizes and removes damaged bases. Has a preference for oxidized purines, such as 7,8-dihydro-8-oxoguanine (8-oxoG). Has AP (apurinic/apyrimidinic) lyase activity and introduces nicks in the DNA strand. Cleaves the DNA backbone by beta-delta elimination to generate a single-strand break at the site of the removed base with both 3'- and 5'-phosphates. The sequence is that of Formamidopyrimidine-DNA glycosylase from Rickettsia peacockii (strain Rustic).